A 445-amino-acid chain; its full sequence is tRNA modification GTPase MnmE (445 aa).

Positions 20, 79, and 119 each coordinate (6S)-5-formyl-5,6,7,8-tetrahydrofolate. A TrmE-type G domain is found at 215–371; that stretch reads GLKLAIIGPP…ILKNIEEIAE (157 aa). Asn-225 contributes to the K(+) binding site. GTP-binding positions include 225–230, 244–250, and 269–272; these read NAGKSS, SNIAGTT, and DTAG. Ser-229 provides a ligand contact to Mg(2+). 3 residues coordinate K(+): Ser-244, Ile-246, and Thr-249. Thr-250 serves as a coordination point for Mg(2+). Residue Lys-445 participates in (6S)-5-formyl-5,6,7,8-tetrahydrofolate binding.

Belongs to the TRAFAC class TrmE-Era-EngA-EngB-Septin-like GTPase superfamily. TrmE GTPase family. Homodimer. Heterotetramer of two MnmE and two MnmG subunits. The cofactor is K(+).

The protein localises to the cytoplasm. In terms of biological role, exhibits a very high intrinsic GTPase hydrolysis rate. Involved in the addition of a carboxymethylaminomethyl (cmnm) group at the wobble position (U34) of certain tRNAs, forming tRNA-cmnm(5)s(2)U34. The chain is tRNA modification GTPase MnmE from Rickettsia bellii (strain RML369-C).